The primary structure comprises 141 residues: ATP synthase epsilon chain 1 (141 aa).

It belongs to the ATPase epsilon chain family. As to quaternary structure, F-type ATPases have 2 components, CF(1) - the catalytic core - and CF(0) - the membrane proton channel. CF(1) has five subunits: alpha(3), beta(3), gamma(1), delta(1), epsilon(1). CF(0) has three main subunits: a, b and c.

The protein resides in the cell inner membrane. Functionally, produces ATP from ADP in the presence of a proton gradient across the membrane. The chain is ATP synthase epsilon chain 1 from Thiobacillus denitrificans (strain ATCC 25259 / T1).